The sequence spans 294 residues: Cytidine deaminase (294 aa).

CMP/dCMP-type deaminase domains follow at residues 48-168 (DEDA…FGPK) and 186-294 (LTGD…VLLG). Residue 89-91 (NME) coordinates substrate. Zn(2+) is bound at residue His-102. The Proton donor role is filled by Glu-104. Zn(2+) is bound by residues Cys-129 and Cys-132.

The protein belongs to the cytidine and deoxycytidylate deaminase family. As to quaternary structure, homodimer. It depends on Zn(2+) as a cofactor.

The enzyme catalyses cytidine + H2O + H(+) = uridine + NH4(+). It catalyses the reaction 2'-deoxycytidine + H2O + H(+) = 2'-deoxyuridine + NH4(+). Functionally, this enzyme scavenges exogenous and endogenous cytidine and 2'-deoxycytidine for UMP synthesis. The protein is Cytidine deaminase of Salmonella paratyphi A (strain ATCC 9150 / SARB42).